A 610-amino-acid polypeptide reads, in one-letter code: Protein Spindly-B (610 aa).

Residues 1 to 392 (MEESETVLKL…IDKVKDELSL (392 aa)) adopt a coiled-coil conformation. The disordered stretch occupies residues 474–610 (TEAHGVSDAT…KPATAQCPQQ (137 aa)). Basic and acidic residues-rich tracts occupy residues 493-511 (SDDK…KDQD) and 535-548 (RIME…DLNK). The span at 549-561 (RNPNNCTITSIHP) shows a compositional bias: polar residues. Residues 570-583 (SELKKVDEEQEKRK) are compositionally biased toward basic and acidic residues.

It belongs to the Spindly family.

It localises to the chromosome. The protein resides in the centromere. Its subcellular location is the kinetochore. Functionally, required for the localization of dynein and dynactin to the mitotic kintochore. Dynein is believed to control the initial lateral interaction between the kinetochore and spindle microtubules and to facilitate the subsequent formation of end-on kinetochore-microtubule attachments mediated by the NDC80 complex. The sequence is that of Protein Spindly-B (spdl1-b) from Xenopus laevis (African clawed frog).